A 2148-amino-acid chain; its full sequence is Polyketide synthase 1 (2148 aa).

The tract at residues 19-261 (FIFGDQSSCN…TPLAVHAPYH (243 aa)) is N-terminal acylcarrier protein transacylase domain (SAT). Residues 394 to 829 (ESKIAIIGMS…GGNTALLVED (436 aa)) form the Ketosynthase family 3 (KS3) domain. Residues cysteine 566, histidine 701, and histidine 745 each act as for beta-ketoacyl synthase activity in the active site. The tract at residues 929–1233 (AFVFSGQGSQ…PSLMRNKDGW (305 aa)) is malonyl-CoA:ACP transacylase (MAT) domain. The active-site For acyl/malonyl transferase activity is serine 1018. A product template (PT) domain region spans residues 1310–1624 (TASVHRIVHE…RKVLNTAMPP (315 aa)). The segment at 1314–1447 (HRIVHESVEK…SSLHFEQPKV (134 aa)) is N-terminal hotdog fold. The 306-residue stretch at 1314–1619 (HRIVHESVEK…FQGIPRKVLN (306 aa)) folds into the PKS/mFAS DH domain. Histidine 1346 (proton acceptor; for dehydratase activity) is an active-site residue. The C-terminal hotdog fold stretch occupies residues 1474 to 1619 (LNSRMSSGVI…FQGIPRKVLN (146 aa)). Aspartate 1533 acts as the Proton donor; for dehydratase activity in catalysis. Residues 1619–1655 (NTAMPPPKSQNEAPVRSGPAKPAVKPPRSASSEHSGH) are disordered. Residues 1678–1752 (RNPMLPVFKI…DLAAHLGMDT (75 aa)) form the Carrier 1 domain. O-(pantetheine 4'-phosphoryl)serine is present on serine 1712. The segment covering 1755 to 1790 (ADQSSGQSSSSGGLSPRSDSIGEMTSSATTPPSMSP) has biased composition (low complexity). Residues 1755–1796 (ADQSSGQSSSSGGLSPRSDSIGEMTSSATTPPSMSPRGSVSG) are disordered. Residues 1793–1870 (SVSGSQCKDV…SFKHMFQQGH (78 aa)) form the Carrier 2 domain. At serine 1830 the chain carries O-(pantetheine 4'-phosphoryl)serine. Residues 1882–2146 (LKQYRATSTL…ERVAAFIRSI (265 aa)) form a thioesterase (TE) domain region. Serine 1973 functions as the For thioesterase activity in the catalytic mechanism.

Polyketide synthase; part of the Pks1 gene cluster that mediates the biosynthesis of an anthraquinone derivative pigment that contributes to conidial pigmentation that provides protection from UV radiation, heat and cold stress. The polyketide synthase Pks1 produces 1-acetyl-2,4,6,8-tetrahydroxy-9,10-anthraquinone though condensation of acetyl-CoA with malonyl-CoA. The dehydratase EthD and the laccase Mlac1 further convert the anthraquinone derivative into the final conidial pigment. This chain is Polyketide synthase 1, found in Metarhizium brunneum (strain ARSEF 3297).